The chain runs to 597 residues: Intrastrand cross-link recognition protein (597 aa).

Residues 1-28 are compositionally biased toward polar residues; sequence MNTGISPKQDDASNSNLLNIGQDHSLQY. Disordered stretches follow at residues 1–134, 174–212, 259–291, and 327–364; these read MNTG…NVNA, QTNPSVTGTGASSNNNSNNNNVSSGNNSTSSNPAQLAAS, SAGNAAGNANTATHPGLLPPNLQPQLTHHQQQM, and HLQQQQQQQQHPVVKKLSSTQSRIERRKQLKKQGPKRP. Basic and acidic residues predominate over residues 32–42; sequence EHNDSQYRDAS. Low complexity-rich tracts occupy residues 52 to 134, 178 to 212, 260 to 271, 281 to 291, and 327 to 337; these read QFQA…NVNA, SVTGTGASSNNNSNNNNVSSGNNSTSSNPAQLAAS, AGNAAGNANTAT, QPQLTHHQQQM, and HLQQQQQQQQH. Over residues 351–361 the composition is skewed to basic residues; sequence ERRKQLKKQGP. 2 DNA-binding regions (HMG box) span residues 361–429 and 434–502; these read PKRP…DAYE and PKRP…PDEN. The residue at position 532 (Ser532) is a Phosphoserine. Low complexity-rich tracts occupy residues 543-556 and 564-580; these read SVTGSNSNSTNPNT and LQQQPLQQQQQQQQQQQ. Residues 543–597 form a disordered region; it reads SVTGSNSNSTNPNTPVSPPISLQQQPLQQQQQQQQQQQHMLLADPTTNGSIIKNE. Polar residues predominate over residues 587-597; sequence PTTNGSIIKNE.

It is found in the nucleus. Functionally, binds to platinated DNA and confers sensitivity to the anticancer drug cisplatin. Activate the expression of the COX5B gene. In Saccharomyces cerevisiae (strain ATCC 204508 / S288c) (Baker's yeast), this protein is Intrastrand cross-link recognition protein (IXR1).